Here is a 119-residue protein sequence, read N- to C-terminus: Large ribosomal subunit protein bL20 (119 aa).

This sequence belongs to the bacterial ribosomal protein bL20 family.

Functionally, binds directly to 23S ribosomal RNA and is necessary for the in vitro assembly process of the 50S ribosomal subunit. It is not involved in the protein synthesizing functions of that subunit. The sequence is that of Large ribosomal subunit protein bL20 from Jannaschia sp. (strain CCS1).